The chain runs to 911 residues: Protein dead ringer (911 aa).

Disordered stretches follow at residues 1–44, 67–87, and 172–274; these read MQLR…DCDS, SGGG…LSHH, and HVTS…QNNG. The segment covering 19–34 has biased composition (basic and acidic residues); the sequence is IERDSDLGDDLSHGDR. Phosphoserine is present on Ser30. Thr35 is subject to Phosphothreonine. Ser44 is subject to Phosphoserine. The segment covering 174-201 has biased composition (low complexity); it reads TSSPSGGNGSSYNGGTTPTNSSNSNATT. The segment covering 202 to 231 has biased composition (gly residues); sequence NGGGTAGPGGTGGSGGGGGGGGGGGGGVGG. Residues 252–273 are compositionally biased toward low complexity; that stretch reads AANSASNSSTSSEASNSSQQNN. An ARID domain is found at 293–385; sequence DPKRKEFLDD…YLYPYECEKK (93 aa). Disordered stretches follow at residues 501-633, 662-775, and 826-877; these read GMPP…VGSG, PSMG…GKLN, and QSET…DQDM. Residues 512-550 are compositionally biased toward low complexity; that stretch reads HQQQHSQQQQQQQHHHQQQQQQQSQQQHHLQQQRQRSQS. Residues 570 to 600 show a composition bias toward polar residues; sequence HNNNSPPGSAHTSPQQREALNLSDSPPNLTN. Phosphoserine is present on residues Ser592 and Ser594. The span at 601-621 shows a compositional bias: basic and acidic residues; that stretch reads IKREREREPTPEPVDQDDKFV. Position 720 is a phosphoserine (Ser720). An REKLES domain is found at 731 to 825; the sequence is TTGGSVGHRH…GVLVANVPLS (95 aa). Residues 737 to 751 show a composition bias toward basic residues; that stretch reads GHRHSSPVSTKKKGG. The segment covering 841–853 has biased composition (acidic residues); the sequence is TVEEEKDEEEEEE. A compositionally biased stretch (basic and acidic residues) spans 854–870; it reads PKAAEEESHRSPVKQEN.

Present in the pharyngeal muscles, hindgut epithelium, amnioserosa, ring gland, midgut-hindgut junction, posterior region of each brain lobe, longitudinal glial cells of the CNS and the salivary gland duct of germ-band retracted embryos.

It localises to the nucleus. In terms of biological role, transcription factor which is a downstream target of gcm and repo. Directly or indirectly activates the transcription of locos and pros, which are essential for the development of some glial cells. Plays an essential role in defining the cell shape and migration characteristics of longitudinal glia that enable them to establish a normal axon scaffold. The polypeptide is Protein dead ringer (retn) (Drosophila melanogaster (Fruit fly)).